The chain runs to 285 residues: Eukaryotic translation initiation factor 3 subunit F-2 (285 aa).

Residues 11 to 145 (VVLQPLVLFQ…TRLYCGVEMG (135 aa)) form the MPN domain.

The protein belongs to the eIF-3 subunit F family. Component of the eukaryotic translation initiation factor 3 (eIF-3) complex. The eIF-3 complex interacts with pix.

Its subcellular location is the cytoplasm. Its function is as follows. Component of the eukaryotic translation initiation factor 3 (eIF-3) complex, which is involved in protein synthesis of a specialized repertoire of mRNAs and, together with other initiation factors, stimulates binding of mRNA and methionyl-tRNAi to the 40S ribosome. The eIF-3 complex specifically targets and initiates translation of a subset of mRNAs involved in cell proliferation. This Drosophila ananassae (Fruit fly) protein is Eukaryotic translation initiation factor 3 subunit F-2.